Here is a 503-residue protein sequence, read N- to C-terminus: Probable cytosol aminopeptidase (503 aa).

The Mn(2+) site is built by Lys274 and Asp279. The active site involves Lys286. Residues Asp297, Asp356, and Glu358 each coordinate Mn(2+). Residue Arg360 is part of the active site.

It belongs to the peptidase M17 family. The cofactor is Mn(2+).

It is found in the cytoplasm. The enzyme catalyses Release of an N-terminal amino acid, Xaa-|-Yaa-, in which Xaa is preferably Leu, but may be other amino acids including Pro although not Arg or Lys, and Yaa may be Pro. Amino acid amides and methyl esters are also readily hydrolyzed, but rates on arylamides are exceedingly low.. It catalyses the reaction Release of an N-terminal amino acid, preferentially leucine, but not glutamic or aspartic acids.. Its function is as follows. Presumably involved in the processing and regular turnover of intracellular proteins. Catalyzes the removal of unsubstituted N-terminal amino acids from various peptides. The sequence is that of Probable cytosol aminopeptidase from Burkholderia cenocepacia (strain ATCC BAA-245 / DSM 16553 / LMG 16656 / NCTC 13227 / J2315 / CF5610) (Burkholderia cepacia (strain J2315)).